We begin with the raw amino-acid sequence, 102 residues long: Small ribosomal subunit protein uS10 (102 aa).

It belongs to the universal ribosomal protein uS10 family. Part of the 30S ribosomal subunit.

Its function is as follows. Involved in the binding of tRNA to the ribosomes. In Exiguobacterium sibiricum (strain DSM 17290 / CCUG 55495 / CIP 109462 / JCM 13490 / 255-15), this protein is Small ribosomal subunit protein uS10.